A 569-amino-acid polypeptide reads, in one-letter code: Urease subunit alpha (569 aa).

Residues 131 to 569 enclose the Urease domain; sequence GGIDTHIHFI…LPLAQRYLLL (439 aa). Ni(2+)-binding residues include His136, His138, and Lys219. Lys219 is subject to N6-carboxylysine. His221 is a substrate binding site. Residues His248 and His274 each coordinate Ni(2+). His322 serves as the catalytic Proton donor. A Ni(2+)-binding site is contributed by Asp362.

The protein belongs to the metallo-dependent hydrolases superfamily. Urease alpha subunit family. Heterotrimer of UreA (gamma), UreB (beta) and UreC (alpha) subunits. Three heterotrimers associate to form the active enzyme. Requires Ni cation as cofactor. Post-translationally, carboxylation allows a single lysine to coordinate two nickel ions.

The protein localises to the cytoplasm. The enzyme catalyses urea + 2 H2O + H(+) = hydrogencarbonate + 2 NH4(+). The protein operates within nitrogen metabolism; urea degradation; CO(2) and NH(3) from urea (urease route): step 1/1. In Parasynechococcus marenigrum (strain WH8102), this protein is Urease subunit alpha.